We begin with the raw amino-acid sequence, 347 residues long: 4-hydroxy-2-oxovalerate aldolase 4 (347 aa).

The 251-residue stretch at 9 to 259 (ITIVDTTLRD…DTGVDLFPLI (251 aa)) folds into the Pyruvate carboxyltransferase domain. Substrate is bound by residues 17 to 18 (RD), S171, and H198. D18 lines the Mn(2+) pocket. Positions 198 and 200 each coordinate Mn(2+). Position 289 (Y289) interacts with substrate.

It belongs to the 4-hydroxy-2-oxovalerate aldolase family.

It carries out the reaction (S)-4-hydroxy-2-oxopentanoate = acetaldehyde + pyruvate. This is 4-hydroxy-2-oxovalerate aldolase 4 from Rhodococcus opacus (strain B4).